Consider the following 134-residue polypeptide: ATP synthase epsilon chain (134 aa).

Belongs to the ATPase epsilon chain family. As to quaternary structure, F-type ATPases have 2 components, CF(1) - the catalytic core - and CF(0) - the membrane proton channel. CF(1) has five subunits: alpha(3), beta(3), gamma(1), delta(1), epsilon(1). CF(0) has three main subunits: a, b and c.

The protein resides in the cell membrane. Produces ATP from ADP in the presence of a proton gradient across the membrane. The polypeptide is ATP synthase epsilon chain (Clostridium botulinum (strain Alaska E43 / Type E3)).